The chain runs to 862 residues: DNA replication licensing factor MCM4 (862 aa).

The segment covering 1–10 (MSSPASTPSR) has biased composition (low complexity). Disordered regions lie at residues 1–71 (MSSP…FSSP) and 90–121 (TYGTPSSRVEGTPRSGVRGTPVRQRPDLGSAR). Serine 2 carries the N-acetylserine modification. The residue at position 6 (serine 6) is a Phosphoserine. Threonine 7 and threonine 19 each carry phosphothreonine. Residues serine 26, serine 31, and serine 32 each carry the phosphoserine modification. Residues 61–71 (PPAQNALFSSP) are compositionally biased toward polar residues. Residue threonine 101 is modified to Phosphothreonine. Serine 104 carries the post-translational modification Phosphoserine. The residue at position 109 (threonine 109) is a Phosphothreonine. 4 positions are modified to phosphoserine: serine 119, serine 130, serine 141, and serine 144. Position 219 is an N6-acetyllysine (lysine 219). A Glycyl lysine isopeptide (Lys-Gly) (interchain with G-Cter in SUMO2) cross-link involves residue lysine 438. Lysine 449 is subject to N6-acetyllysine. The 210-residue stretch at 457-666 (IYERLASALA…YDRRLAHHLV (210 aa)) folds into the MCM domain. The ATP site is built by tyrosine 470, arginine 496, lysine 515, serine 516, asparagine 617, arginine 642, arginine 731, and glutamate 734. The Arginine finger motif lies at 641–644 (SRFD). Lysine 797 participates in a covalent cross-link: Glycyl lysine isopeptide (Lys-Gly) (interchain with G-Cter in SUMO2). Lysine 857 bears the N6-acetyllysine mark.

The protein belongs to the MCM family. As to quaternary structure, component of the MCM2-7 complex. The complex forms a toroidal hexameric ring with the proposed subunit order MCM2-MCM6-MCM4-MCM7-MCM3-MCM5. Component of the CMG helicase complex, a hexameric ring of related MCM2-7 subunits stabilized by CDC45 and the tetrameric GINS complex. Interacts with MCMBP. Sumoylated; SUMO2 modified in response to stress caused by inhibition of proteasome activity (in vitro).

The protein resides in the nucleus. The protein localises to the chromosome. The enzyme catalyses ATP + H2O = ADP + phosphate + H(+). Acts as a component of the MCM2-7 complex (MCM complex) which is the replicative helicase essential for 'once per cell cycle' DNA replication initiation and elongation in eukaryotic cells. Core component of CDC45-MCM-GINS (CMG) helicase, the molecular machine that unwinds template DNA during replication, and around which the replisome is built. The active ATPase sites in the MCM2-7 ring are formed through the interaction surfaces of two neighboring subunits such that a critical structure of a conserved arginine finger motif is provided in trans relative to the ATP-binding site of the Walker A box of the adjacent subunit. The six ATPase active sites, however, are likely to contribute differentially to the complex helicase activity. The chain is DNA replication licensing factor MCM4 (Mcm4) from Mus musculus (Mouse).